The primary structure comprises 239 residues: Probable transcriptional regulatory protein CD630_07950 (239 aa).

Belongs to the TACO1 family.

The protein resides in the cytoplasm. The chain is Probable transcriptional regulatory protein CD630_07950 from Clostridioides difficile (strain 630) (Peptoclostridium difficile).